We begin with the raw amino-acid sequence, 720 residues long: Capsid protein (720 aa).

Disordered regions lie at residues 546 to 569 (GTQRPPRPQPTDPCQQPRWEGPNF) and 616 to 691 (TEPS…RDRD). Residues 652 to 664 (PTDEDERYLEAEA) show a composition bias toward acidic residues.

This sequence belongs to the anelloviridae capsid protein family.

The protein localises to the virion. Its function is as follows. Self-assembles to form an icosahedral capsid with a T=1 symmetry, about 30 nm in diameter, and consisting of 60 capsid proteins. The capsid encapsulates the genomic DNA. Capsid protein is involved in attachment and entry into the host cell. The protein is Capsid protein of Torque teno douroucouli virus (isolate At-TTV3).